A 209-amino-acid polypeptide reads, in one-letter code: Kynurenine formamidase (209 aa).

Tryptophan 19 contacts substrate. 3 residues coordinate Zn(2+): histidine 49, histidine 53, and aspartate 55. Histidine 59 functions as the Proton donor/acceptor in the catalytic mechanism. 2 residues coordinate Zn(2+): histidine 160 and glutamate 172.

It belongs to the Cyclase 1 superfamily. KynB family. Homodimer. Requires Zn(2+) as cofactor.

It carries out the reaction N-formyl-L-kynurenine + H2O = L-kynurenine + formate + H(+). It participates in amino-acid degradation; L-tryptophan degradation via kynurenine pathway; L-kynurenine from L-tryptophan: step 2/2. Its function is as follows. Catalyzes the hydrolysis of N-formyl-L-kynurenine to L-kynurenine, the second step in the kynurenine pathway of tryptophan degradation. The sequence is that of Kynurenine formamidase from Ralstonia pickettii (strain 12J).